The sequence spans 122 residues: Large ribosomal subunit protein uL14 (122 aa).

This sequence belongs to the universal ribosomal protein uL14 family. As to quaternary structure, part of the 50S ribosomal subunit. Forms a cluster with proteins L3 and L19. In the 70S ribosome, L14 and L19 interact and together make contacts with the 16S rRNA in bridges B5 and B8.

In terms of biological role, binds to 23S rRNA. Forms part of two intersubunit bridges in the 70S ribosome. In Thermosipho melanesiensis (strain DSM 12029 / CIP 104789 / BI429), this protein is Large ribosomal subunit protein uL14.